A 427-amino-acid polypeptide reads, in one-letter code: Glutamate-1-semialdehyde 2,1-aminomutase (427 aa).

N6-(pyridoxal phosphate)lysine is present on K268.

The protein belongs to the class-III pyridoxal-phosphate-dependent aminotransferase family. HemL subfamily. It depends on pyridoxal 5'-phosphate as a cofactor.

The protein localises to the cytoplasm. The enzyme catalyses (S)-4-amino-5-oxopentanoate = 5-aminolevulinate. Its pathway is porphyrin-containing compound metabolism; protoporphyrin-IX biosynthesis; 5-aminolevulinate from L-glutamyl-tRNA(Glu): step 2/2. The protein is Glutamate-1-semialdehyde 2,1-aminomutase of Methanococcus maripaludis (strain C7 / ATCC BAA-1331).